Here is a 140-residue protein sequence, read N- to C-terminus: Nuclear receptor 2C2-associated protein (140 aa).

The protein belongs to the NR2C2AP family. In terms of assembly, interacts with NR2C2/TR4.

The protein resides in the nucleus. Functionally, may act as a repressor of NR2C2-mediated transactivation by suppressing the binding between NR2C2/TR4 and the TR4-response element in target genes. This Mus musculus (Mouse) protein is Nuclear receptor 2C2-associated protein (Nr2c2ap).